The chain runs to 306 residues: Protein YIPF1 (306 aa).

The Cytoplasmic portion of the chain corresponds to 1 to 119 (MAAVDDLQFE…VRLYIRSNPD (119 aa)). A disordered region spans residues 14–62 (NAATSLTANPDATTVNIEDPGETPKHQSGSPRGSGREEDDELLGNDDSD). Over residues 15 to 29 (AATSLTANPDATTVN) the composition is skewed to polar residues. The span at 50-59 (EEDDELLGND) shows a compositional bias: acidic residues. Residues 120-140 (LYGPFWICATLVFAIAISGNL) form a helical membrane-spanning segment. Residues 141-162 (SNFLIHLGEKTYRYVPEFRKVS) lie on the Lumenal side of the membrane. Residues 163–183 (IAATTIYAYAWLVPLALWGFL) traverse the membrane as a helical segment. The Cytoplasmic portion of the chain corresponds to 184-200 (MWRNSKVMNIVSYSFLE). A helical membrane pass occupies residues 201 to 221 (IVCVYGYSLFIYIPTAILWII). The Lumenal segment spans residues 222-227 (PQKAVR). Residues 228–248 (WILVMIALGISGSVLAMTFWP) traverse the membrane as a helical segment. Topologically, residues 249-256 (AVREDNRR) are cytoplasmic. The helical transmembrane segment at 257-277 (VALATIVTIVLLHMLLSVGCL) threads the bilayer. Topologically, residues 278-306 (AYFFDAPEMDHLPTTTATPNQTVAAAKSS) are lumenal. N-linked (GlcNAc...) asparagine glycosylation is present at Asn-297.

It belongs to the YIP1 family. As to quaternary structure, interacts with YIPF6; this interaction may stabilize YIPF1. May also form a ternary complex with YIPF2 and YIPF6.

The protein localises to the golgi apparatus. Its subcellular location is the cis-Golgi network membrane. It is found in the trans-Golgi network membrane. It localises to the late endosome membrane. The polypeptide is Protein YIPF1 (YIPF1) (Pongo abelii (Sumatran orangutan)).